The following is a 286-amino-acid chain: tRNA pseudouridine synthase B (286 aa).

The Nucleophile role is filled by aspartate 40.

The protein belongs to the pseudouridine synthase TruB family. Type 1 subfamily.

It catalyses the reaction uridine(55) in tRNA = pseudouridine(55) in tRNA. Responsible for synthesis of pseudouridine from uracil-55 in the psi GC loop of transfer RNAs. This chain is tRNA pseudouridine synthase B, found in Mesoplasma florum (strain ATCC 33453 / NBRC 100688 / NCTC 11704 / L1) (Acholeplasma florum).